Here is a 901-residue protein sequence, read N- to C-terminus: Protein SOK1 (901 aa).

Disordered regions lie at residues 1-87 (MDQP…QNII), 106-139 (RSSG…SDLK), and 162-231 (NDDN…NASN). Residues 10-51 (PTTASNPAPSSTNSSSAPSATNSKQERSSSSLSKPSSVVPSK) are compositionally biased toward low complexity. A phosphoserine mark is found at Ser-40 and Ser-53. Composition is skewed to polar residues over residues 74 to 87 (GDTS…QNII) and 106 to 115 (RSSGVITPSM). Positions 116 to 138 (SLNASTNATNNDSSGNSANSSDL) are enriched in low complexity. Phosphoserine occurs at positions 191 and 193. The span at 220–231 (AAQQQPPGNASN) shows a compositional bias: polar residues. A Phosphoserine modification is found at Ser-245.

The protein belongs to the TCP11 family.

The protein localises to the nucleus. Functionally, high copy suppressor of a cyclic AMP-dependent protein kinase mutant. This Saccharomyces cerevisiae (strain ATCC 204508 / S288c) (Baker's yeast) protein is Protein SOK1 (SOK1).